The chain runs to 150 residues: Transcriptional repressor NrdR (150 aa).

A zinc finger lies at cysteine 3–cysteine 34. The ATP-cone domain occupies valine 49–threonine 139.

It belongs to the NrdR family. Zn(2+) is required as a cofactor.

In terms of biological role, negatively regulates transcription of bacterial ribonucleotide reductase nrd genes and operons by binding to NrdR-boxes. The chain is Transcriptional repressor NrdR from Clostridium botulinum (strain Alaska E43 / Type E3).